We begin with the raw amino-acid sequence, 250 residues long: ATP synthase subunit a (250 aa).

Helical transmembrane passes span 26 to 46 (FTNA…FLYF), 84 to 104 (FFPL…LGMF), 114 to 134 (IIVT…YGFY), 143 to 163 (VFVP…IEII), 193 to 213 (FVAS…LPLI), and 216 to 236 (VALT…FAVL).

This sequence belongs to the ATPase A chain family. As to quaternary structure, F-type ATPases have 2 components, CF(1) - the catalytic core - and CF(0) - the membrane proton channel. CF(1) has five subunits: alpha(3), beta(3), gamma(1), delta(1), epsilon(1). CF(0) has three main subunits: a(1), b(2) and c(9-12). The alpha and beta chains form an alternating ring which encloses part of the gamma chain. CF(1) is attached to CF(0) by a central stalk formed by the gamma and epsilon chains, while a peripheral stalk is formed by the delta and b chains.

It localises to the cell inner membrane. Its function is as follows. Key component of the proton channel; it plays a direct role in the translocation of protons across the membrane. The chain is ATP synthase subunit a from Rhizobium etli (strain ATCC 51251 / DSM 11541 / JCM 21823 / NBRC 15573 / CFN 42).